A 181-amino-acid polypeptide reads, in one-letter code: Isopentenyl-diphosphate Delta-isomerase (181 aa).

2 residues coordinate Mn(2+): His24 and His30. One can recognise a Nudix hydrolase domain in the interval 28-168 (LLHLAFSVLL…PDTFSVWFPT (141 aa)). Cys68 is a catalytic residue. Position 70 (His70) interacts with Mn(2+). Residue Glu88 coordinates Mg(2+). Mn(2+)-binding residues include Glu117 and Glu119. Glu119 is a catalytic residue.

The protein belongs to the IPP isomerase type 1 family. It depends on Mg(2+) as a cofactor. The cofactor is Mn(2+).

Its subcellular location is the cytoplasm. The enzyme catalyses isopentenyl diphosphate = dimethylallyl diphosphate. It participates in isoprenoid biosynthesis; dimethylallyl diphosphate biosynthesis; dimethylallyl diphosphate from isopentenyl diphosphate: step 1/1. In terms of biological role, catalyzes the 1,3-allylic rearrangement of the homoallylic substrate isopentenyl (IPP) to its highly electrophilic allylic isomer, dimethylallyl diphosphate (DMAPP). This is Isopentenyl-diphosphate Delta-isomerase from Aliivibrio fischeri (strain MJ11) (Vibrio fischeri).